The following is a 281-amino-acid chain: Probable endonuclease 4 (281 aa).

Zn(2+) contacts are provided by H78, H118, E149, D181, H184, H216, D229, H231, and E260.

This sequence belongs to the AP endonuclease 2 family. The cofactor is Zn(2+).

It catalyses the reaction Endonucleolytic cleavage to 5'-phosphooligonucleotide end-products.. Its function is as follows. Endonuclease IV plays a role in DNA repair. It cleaves phosphodiester bonds at apurinic or apyrimidinic (AP) sites, generating a 3'-hydroxyl group and a 5'-terminal sugar phosphate. The polypeptide is Probable endonuclease 4 (Thermoplasma acidophilum (strain ATCC 25905 / DSM 1728 / JCM 9062 / NBRC 15155 / AMRC-C165)).